The chain runs to 1013 residues: Probable ubiquitination network signaling protein acrB (1013 aa).

Disordered stretches follow at residues 1–65 (MPRS…NSDT) and 105–137 (SYGQANGAVPQNGGLTGQASRRTESSKRSGSNT). Polar residues predominate over residues 30–65 (QKSNGQLNGNANGSSAPISGPSSQVDWPSSRSNSDT). 3 helical membrane-spanning segments follow: residues 158 to 178 (IAILIFLLQLPPMVLTLVQFL), 211 to 231 (LGTMIAMDGFFLLFWGLFMWT), and 254 to 274 (SGKNGGVNTLCVGIVLVLHLI). Residues 339–367 (RRSMAKNRAPAPPRTGKRVDTEASAGSQT) are disordered. Residues 596-782 (TTLKNSIVNA…REQDQAKVEA (187 aa)) are a coiled coil. Positions 875-899 (SPLQHASSPIGPTSSRPTSPTQAPS) are enriched in polar residues. Disordered stretches follow at residues 875–902 (SPLQHASSPIGPTSSRPTSPTQAPSYLQ) and 953–1013 (DLSE…GKGN). A compositionally biased stretch (basic and acidic residues) spans 954–965 (LSEKVVDKRRSS). Over residues 993-1002 (SGSGGSGSGS) the composition is skewed to gly residues. Positions 1003-1013 (GSPSSATGKGN) are enriched in low complexity.

The protein belongs to the acrB family.

It is found in the membrane. Its function is as follows. Component of the regulatory network controlling carbon source utilization through ubiquitination and deubiquitination involving creA, creB, creC, creD and acrB. Involved in resistance to acriflavine, and required for normal growth on a range of sole carbon sources, including fructose, cellobiose, raffinose, and starch, and reduced utilization of amino acids, including GABA and beta-alanine, as sole carbon and nitrogen sources. The chain is Probable ubiquitination network signaling protein acrB (acrB) from Aspergillus oryzae (strain ATCC 42149 / RIB 40) (Yellow koji mold).